The primary structure comprises 491 residues: Ketol-acid reductoisomerase (NADP(+)) (491 aa).

In terms of domain architecture, KARI N-terminal Rossmann spans A15–S208. NADP(+)-binding positions include C45 to Q48, R68, R76, S78, and D108 to Q110. The active site involves H132. G158 is an NADP(+) binding site. KARI C-terminal knotted domains lie at S209–Q344 and F345–M484. Residues D217, E221, E389, and E393 each coordinate Mg(2+). S414 serves as a coordination point for substrate.

It belongs to the ketol-acid reductoisomerase family. It depends on Mg(2+) as a cofactor.

The enzyme catalyses (2R)-2,3-dihydroxy-3-methylbutanoate + NADP(+) = (2S)-2-acetolactate + NADPH + H(+). It catalyses the reaction (2R,3R)-2,3-dihydroxy-3-methylpentanoate + NADP(+) = (S)-2-ethyl-2-hydroxy-3-oxobutanoate + NADPH + H(+). It participates in amino-acid biosynthesis; L-isoleucine biosynthesis; L-isoleucine from 2-oxobutanoate: step 2/4. Its pathway is amino-acid biosynthesis; L-valine biosynthesis; L-valine from pyruvate: step 2/4. Its function is as follows. Involved in the biosynthesis of branched-chain amino acids (BCAA). Catalyzes an alkyl-migration followed by a ketol-acid reduction of (S)-2-acetolactate (S2AL) to yield (R)-2,3-dihydroxy-isovalerate. In the isomerase reaction, S2AL is rearranged via a Mg-dependent methyl migration to produce 3-hydroxy-3-methyl-2-ketobutyrate (HMKB). In the reductase reaction, this 2-ketoacid undergoes a metal-dependent reduction by NADPH to yield (R)-2,3-dihydroxy-isovalerate. The polypeptide is Ketol-acid reductoisomerase (NADP(+)) (Salmonella heidelberg (strain SL476)).